Here is a 173-residue protein sequence, read N- to C-terminus: ATP synthase subunit delta (173 aa).

Belongs to the ATPase delta chain family. F-type ATPases have 2 components, F(1) - the catalytic core - and F(0) - the membrane proton channel. F(1) has five subunits: alpha(3), beta(3), gamma(1), delta(1), epsilon(1). F(0) has three main subunits: a(1), b(2) and c(10-14). The alpha and beta chains form an alternating ring which encloses part of the gamma chain. F(1) is attached to F(0) by a central stalk formed by the gamma and epsilon chains, while a peripheral stalk is formed by the delta and b chains.

It is found in the cell inner membrane. F(1)F(0) ATP synthase produces ATP from ADP in the presence of a proton or sodium gradient. F-type ATPases consist of two structural domains, F(1) containing the extramembraneous catalytic core and F(0) containing the membrane proton channel, linked together by a central stalk and a peripheral stalk. During catalysis, ATP synthesis in the catalytic domain of F(1) is coupled via a rotary mechanism of the central stalk subunits to proton translocation. Its function is as follows. This protein is part of the stalk that links CF(0) to CF(1). It either transmits conformational changes from CF(0) to CF(1) or is implicated in proton conduction. The protein is ATP synthase subunit delta of Campylobacter lari (strain RM2100 / D67 / ATCC BAA-1060).